The following is a 2625-amino-acid chain: Highly reducing polyketide synthase frbB (2625 aa).

A compositionally biased stretch (basic and acidic residues) spans 1–10 (MRNIDEHMSE). Residues 1–25 (MRNIDEHMSERATLQSSGGYGERDS) form a disordered region. One can recognise a Ketosynthase family 3 (KS3) domain in the interval 27–449 (VEPIAIIGMS…GTNAHVILDR (423 aa)). Residues Cys200, His334, and His375 each act as for beta-ketoacyl synthase activity in the active site. The segment at 563 to 883 (YVFSGQGAQY…DAASTLLTTI (321 aa)) is malonyl-CoA:ACP transacylase (MAT) domain. Positions 942–1080 (HELLGNMSTD…GRIRAVLDDS (139 aa)) are N-terminal hotdog fold. The dehydratase (DH) domain stretch occupies residues 942–1252 (HELLGNMSTD…GMILAKLPGG (311 aa)). The 314-residue stretch at 942-1255 (HELLGNMSTD…LAKLPGGTSR (314 aa)) folds into the PKS/mFAS DH domain. The Proton acceptor; for dehydratase activity role is filled by His974. The interval 1102-1255 (VRFVSPSAFY…LAKLPGGTSR (154 aa)) is C-terminal hotdog fold. Asp1167 (proton donor; for dehydratase activity) is an active-site residue. Residues 1490–1673 (YHQIKAYIAE…GFVDTEPVFR (184 aa)) are methyltransferase (CMet) domain. Positions 1907-2220 (GLLETFHWKP…SGKHIGKVIL (314 aa)) are enoyl reductase (ER) domain. The interval 2261-2439 (AVYIVVGGLG…GYSINIGPVS (179 aa)) is ketoreductase (KR) domain. The Carrier domain occupies 2542–2619 (GAEAAVLTAI…HLARLAAEES (78 aa)). Ser2579 carries the O-(pantetheine 4'-phosphoryl)serine modification.

The protein operates within antifungal biosynthesis. In terms of biological role, highly reducing polyketide synthase; part of the gene cluster that mediates the biosynthesis of the antifungal antibiotic FR901469, an inhibitor of beta-1,3-glucansynthase, exerting antifungal activity against the pathogenes Candida albicans and Aspergillus fumigatus. FR901469 is a cyclic depsipeptide containing 12 amino acid residues and a fatty acid chain. The NRPS frbI contains 12 modules responsible for the formation of the depsipeptide backbone which is denoted as Acyl-Thr-Ala-Tyr-Val-4OHPro-Thr-Thr-3OHPro-threo3OHGln-Gly-Thr-Orn-OH (C71H116N14O23). The PKS frbB is probably involved in the production of the hydrocarbon chain, and the acyl-CoA ligase frbC might be involved in the transport of the chain to the peptide ptoduct of frbI. Because FR901469 contains 3 hydroxylated amino acid residues, the 3 oxygenases frbA, frbH, and frbJ might be participating in amino acid hydroxylation. As no thioesterase domains were detected in frbI or frbB, the thioesterases frbD and frbE may instead release and cyclize the products of the NRPS and PKS, respectively. The sequence is that of Highly reducing polyketide synthase frbB from Dothideomycetidae sp. (strain 11243) (Fungal sp. (strain No.11243)).